A 157-amino-acid chain; its full sequence is Beta-defensin 125 (157 aa).

A signal peptide spans Met-1–Gly-20. Cystine bridges form between Cys-27-Cys-55, Cys-35-Cys-49, and Cys-39-Cys-56. The interval Gly-109–Asn-157 is disordered. Composition is skewed to low complexity over residues Glu-110 to Thr-121 and Thr-129 to Thr-145.

Belongs to the beta-defensin family.

Its subcellular location is the secreted. Has antibacterial activity. In Pan troglodytes (Chimpanzee), this protein is Beta-defensin 125 (DEFB125).